The primary structure comprises 250 residues: Eukaryotic translation initiation factor 3 subunit K (250 aa).

The PCI domain occupies 54 to 235 (YDLFGNLAIL…DVKAGVVKEN (182 aa)).

It belongs to the eIF-3 subunit K family. As to quaternary structure, component of the eukaryotic translation initiation factor 3 (eIF-3) complex.

The protein localises to the cytoplasm. In terms of biological role, component of the eukaryotic translation initiation factor 3 (eIF-3) complex, which is involved in protein synthesis of a specialized repertoire of mRNAs and, together with other initiation factors, stimulates binding of mRNA and methionyl-tRNAi to the 40S ribosome. The eIF-3 complex specifically targets and initiates translation of a subset of mRNAs involved in cell proliferation. The sequence is that of Eukaryotic translation initiation factor 3 subunit K from Cryptococcus neoformans var. neoformans serotype D (strain B-3501A) (Filobasidiella neoformans).